The primary structure comprises 101 residues: Small ribosomal subunit protein uS14 (101 aa).

Positions 50-70 (SLPRDSSPSRQRKRCRQTGRP) are disordered. Over residues 59 to 68 (RQRKRCRQTG) the composition is skewed to basic residues.

The protein belongs to the universal ribosomal protein uS14 family. Part of the 30S ribosomal subunit. Contacts proteins S3 and S10.

In terms of biological role, binds 16S rRNA, required for the assembly of 30S particles and may also be responsible for determining the conformation of the 16S rRNA at the A site. This Erwinia tasmaniensis (strain DSM 17950 / CFBP 7177 / CIP 109463 / NCPPB 4357 / Et1/99) protein is Small ribosomal subunit protein uS14.